A 633-amino-acid chain; its full sequence is Probable potassium transport system protein Kup 2 (633 aa).

The next 12 membrane-spanning stretches (helical) occupy residues 18-38, 61-81, 109-129, 145-165, 173-193, 211-231, 255-275, 287-307, 345-365, 371-391, 405-425, and 427-447; these read FLAMTIGAIGVVYGDIGTSPL, LISLMLWTLTIIVTFKYVLFL, LMFMAGILGAALFIGDAMITP, PAFHDYVLPISVGIMVLLFAV, VSIFFGPITLIWFLVLGAAGV, AVTFLWNAGFVGFIVLGAVFL, WFAVVFPALTLNYLGQGALVL, LMFPNWALLPVVLLATAATII, IYLPFVNNALLAGVIVLMFMF, LATAYGISVTGAMVVTTVLAF, ATAVLLPLLVLELFFLGANLF, and IHDGGYVPILIAGTLMTTMWT.

The protein belongs to the HAK/KUP transporter (TC 2.A.72) family.

The protein localises to the cell inner membrane. The catalysed reaction is K(+)(in) + H(+)(in) = K(+)(out) + H(+)(out). Its function is as follows. Transport of potassium into the cell. Likely operates as a K(+):H(+) symporter. The sequence is that of Probable potassium transport system protein Kup 2 from Sinorhizobium medicae (strain WSM419) (Ensifer medicae).